The following is a 289-amino-acid chain: Inorganic pyrophosphatase (289 aa).

Serine 2 carries the N-acetylserine modification. The residue at position 57 (lysine 57) is an N6-acetyllysine. Residues aspartate 116, aspartate 121, and aspartate 153 each contribute to the Mg(2+) site. Serine 250 is modified (phosphoserine).

It belongs to the PPase family. Homodimer. Mg(2+) serves as cofactor. The N-terminus is blocked. In terms of tissue distribution, highest levels are found in retinal rod outer segments.

It is found in the cytoplasm. The enzyme catalyses diphosphate + H2O = 2 phosphate + H(+). The sequence is that of Inorganic pyrophosphatase (PPA1) from Bos taurus (Bovine).